We begin with the raw amino-acid sequence, 340 residues long: MKVRIRDFIETTEGLYFAVNTYAHPKNKFFAFLRYVPYEFVDFKIEDNNIREINGRKYIKMAESKIAYKFLEEKFSKYLYYDETINVLMHAIPKEDVKRILRPKERLNEIINEENNLNELEEKCRKLALILEDYGVPIKSMGVSGSLLLKLNNKNSDIDFVIYGKDMHKKAREALKQAFEDNKLKPLSDDFWKIAYKKRIKDKTLTYEEFVFYEKRKYNRGIVDNTMFDLLFTREWDEITEKYGDKRYKNLGFAKIEGRVLNDDFAFDNPAVYKIECYNDEDIKEVVSFTHTYAGQCFNGEEIVARGKLEEVIDKSGERYKRIVVGTTREAFNEYIKIKR.

This is an uncharacterized protein from Methanocaldococcus jannaschii (strain ATCC 43067 / DSM 2661 / JAL-1 / JCM 10045 / NBRC 100440) (Methanococcus jannaschii).